We begin with the raw amino-acid sequence, 248 residues long: Large ribosomal subunit protein uL1 (248 aa).

Belongs to the universal ribosomal protein uL1 family. In terms of assembly, part of the 50S ribosomal subunit.

Functionally, binds directly to 23S rRNA. The L1 stalk is quite mobile in the ribosome, and is involved in E site tRNA release. Its function is as follows. Protein L1 is also a translational repressor protein, it controls the translation of the L11 operon by binding to its mRNA. This Orientia tsutsugamushi (strain Boryong) (Rickettsia tsutsugamushi) protein is Large ribosomal subunit protein uL1.